A 196-amino-acid polypeptide reads, in one-letter code: APGW-amide-related neuropeptide (196 aa).

The signal sequence occupies residues 1–22 (METLNIFLVIFSLLGTIIIASS). Residues 23 to 48 (SDESSERKKRDLDTIDDTNNDFLTAD) constitute a propeptide that is removed on maturation. Tryptophan 54 carries the tryptophan amide modification. Residues 58–68 (SFDDDILNNLD) constitute a propeptide that is removed on maturation. Tryptophan amide is present on tryptophan 74. Positions 78-88 (SDMLFDSEEIE) are excised as a propeptide. A Tryptophan amide modification is found at tryptophan 94. The propeptide occupies 98 to 105 (SSSLYDDE). Tryptophan 111 bears the Tryptophan amide mark. The propeptide occupies 115 to 129 (SSALLDDLSLYNSIV). The residue at position 135 (tryptophan 135) is a Tryptophan amide. The propeptide occupies 139–146 (SDTFKVDI). Tryptophan amide is present on residues tryptophan 151 and tryptophan 158. A propeptide spanning residues 162-196 (SGPNMCMDFQDEILQLYKLLNEAEKLHSECEALNI) is cleaved from the precursor.

As to expression, expressed in cerebral, pedal and visceral ganglia. TPGW-amide is found in pedal and cerebral ganglia and in shell adductor muscle (at protein level). RPGW-amide and KPGW-amide are found in pedal retractor muscle, ABRM and shell adductor muscle (at protein level).

Functionally, RPGW-amide, KPGW-amide and TPGW-amide tetrapeptides are involved in control of muscle contraction and may function as neurotransmitters. These peptides increase tension of the pedal retractor muscle and, in conjunction with FMRF-amide, increase peak tension of the anterior byssus retractor muscle (ABRM). This is APGW-amide-related neuropeptide from Mytilus edulis (Blue mussel).